The chain runs to 101 residues: Integration host factor subunit beta (101 aa).

The interval Pro57–Ser76 is disordered.

Belongs to the bacterial histone-like protein family. In terms of assembly, heterodimer of an alpha and a beta chain.

Functionally, this protein is one of the two subunits of integration host factor, a specific DNA-binding protein that functions in genetic recombination as well as in transcriptional and translational control. This is Integration host factor subunit beta from Nitrobacter winogradskyi (strain ATCC 25391 / DSM 10237 / CIP 104748 / NCIMB 11846 / Nb-255).